The sequence spans 296 residues: Glycine--tRNA ligase alpha subunit (296 aa).

The protein belongs to the class-II aminoacyl-tRNA synthetase family. As to quaternary structure, tetramer of two alpha and two beta subunits.

The protein resides in the cytoplasm. The catalysed reaction is tRNA(Gly) + glycine + ATP = glycyl-tRNA(Gly) + AMP + diphosphate. This chain is Glycine--tRNA ligase alpha subunit, found in Listeria welshimeri serovar 6b (strain ATCC 35897 / DSM 20650 / CCUG 15529 / CIP 8149 / NCTC 11857 / SLCC 5334 / V8).